A 417-amino-acid polypeptide reads, in one-letter code: MFDESYTIKNFDDVLFKAISDEKRRQEEHIELIASENYVSPRVLEAQGSVLTNKYAEGYPGKRYYGGCEFVDVAEELAISRAKLLFGAHYVNVQPHSGSQANAAVMMALLSPGDTFMGMALPHGGHLTHGSKVNFSGKLYHSVEYGVDSNTGLIDYDALEKLALQHKPKLIIAGFSAYSRILDWARFREIADKVGAYLMADIAHVAGLVAVGLYPSPVPYADVVTTTTHKTLRGPRGGLILCKENEEIEKKLNSSVFPGMQGGPLMHVIAAKAVAFAEALLPEFKTYQQQVLANARTMCSVLQSRGYDIVSGGTDNHLLLVDLINKGITGKEADAALGRANITVNKNSVPNDPRSPFVTSGLRLGTPAATTRGFKEREITLLSNWVADVLDNVHDETNISRVKTQVLLLCREFPVYA.

Residues Leu-121 and 125-127 (GHL) each bind (6S)-5,6,7,8-tetrahydrofolate. An N6-(pyridoxal phosphate)lysine modification is found at Lys-230. 355–357 (SPF) contributes to the (6S)-5,6,7,8-tetrahydrofolate binding site.

The protein belongs to the SHMT family. Homodimer. The cofactor is pyridoxal 5'-phosphate.

The protein resides in the cytoplasm. It catalyses the reaction (6R)-5,10-methylene-5,6,7,8-tetrahydrofolate + glycine + H2O = (6S)-5,6,7,8-tetrahydrofolate + L-serine. It functions in the pathway one-carbon metabolism; tetrahydrofolate interconversion. It participates in amino-acid biosynthesis; glycine biosynthesis; glycine from L-serine: step 1/1. Catalyzes the reversible interconversion of serine and glycine with tetrahydrofolate (THF) serving as the one-carbon carrier. This reaction serves as the major source of one-carbon groups required for the biosynthesis of purines, thymidylate, methionine, and other important biomolecules. Also exhibits THF-independent aldolase activity toward beta-hydroxyamino acids, producing glycine and aldehydes, via a retro-aldol mechanism. The sequence is that of Serine hydroxymethyltransferase from Legionella pneumophila (strain Corby).